Reading from the N-terminus, the 205-residue chain is Large ribosomal subunit protein eL15 (205 aa).

Disordered stretches follow at residues 70-90 and 172-197; these read GRKR…HGVN and RGLR…KRRN.

The protein belongs to the eukaryotic ribosomal protein eL15 family.

In Dictyostelium discoideum (Social amoeba), this protein is Large ribosomal subunit protein eL15 (rpl15-1).